Here is a 236-residue protein sequence, read N- to C-terminus: Peptidase E (236 aa).

Residues S122, D137, and H159 each act as charge relay system in the active site.

It belongs to the peptidase S51 family.

The protein localises to the cytoplasm. The enzyme catalyses Dipeptidase E catalyzes the hydrolysis of dipeptides Asp-|-Xaa. It does not act on peptides with N-terminal Glu, Asn or Gln, nor does it cleave isoaspartyl peptides.. In terms of biological role, hydrolyzes dipeptides containing N-terminal aspartate residues. May play a role in allowing the cell to use peptide aspartate to spare carbon otherwise required for the synthesis of the aspartate family of amino acids. The protein is Peptidase E of Shewanella oneidensis (strain ATCC 700550 / JCM 31522 / CIP 106686 / LMG 19005 / NCIMB 14063 / MR-1).